The chain runs to 186 residues: Holliday junction branch migration complex subunit RuvA (186 aa).

The tract at residues 1–63 is domain I; sequence MNDYINGLLH…DNVFKYYGFK (63 aa). The interval 64 to 137 is domain II; sequence NQLIRDLFEL…QKELFNNKIS (74 aa). Position 137 (Ser137) is a region of interest, flexible linker. The segment at 137 to 186 is domain III; sequence SDKKNKVITSLEKLGYKTKDIYKIIINIDEDMNIEDLTKYVLEQLSYLHN.

The protein belongs to the RuvA family. Homotetramer. Forms an RuvA(8)-RuvB(12)-Holliday junction (HJ) complex. HJ DNA is sandwiched between 2 RuvA tetramers; dsDNA enters through RuvA and exits via RuvB. An RuvB hexamer assembles on each DNA strand where it exits the tetramer. Each RuvB hexamer is contacted by two RuvA subunits (via domain III) on 2 adjacent RuvB subunits; this complex drives branch migration. In the full resolvosome a probable DNA-RuvA(4)-RuvB(12)-RuvC(2) complex forms which resolves the HJ.

Its subcellular location is the cytoplasm. In terms of biological role, the RuvA-RuvB-RuvC complex processes Holliday junction (HJ) DNA during genetic recombination and DNA repair, while the RuvA-RuvB complex plays an important role in the rescue of blocked DNA replication forks via replication fork reversal (RFR). RuvA specifically binds to HJ cruciform DNA, conferring on it an open structure. The RuvB hexamer acts as an ATP-dependent pump, pulling dsDNA into and through the RuvAB complex. HJ branch migration allows RuvC to scan DNA until it finds its consensus sequence, where it cleaves and resolves the cruciform DNA. The polypeptide is Holliday junction branch migration complex subunit RuvA (Mycoplasma mycoides subsp. mycoides SC (strain CCUG 32753 / NCTC 10114 / PG1)).